The sequence spans 606 residues: Elongation factor 4 (606 aa).

Positions 10 to 192 (IRKKNFCIIA…AICKYVPSPR (183 aa)) constitute a tr-type G domain. Residues 22 to 27 (DHGKST) and 139 to 142 (NKID) each bind GTP.

The protein belongs to the TRAFAC class translation factor GTPase superfamily. Classic translation factor GTPase family. LepA subfamily.

The protein localises to the cell inner membrane. It carries out the reaction GTP + H2O = GDP + phosphate + H(+). Functionally, required for accurate and efficient protein synthesis under certain stress conditions. May act as a fidelity factor of the translation reaction, by catalyzing a one-codon backward translocation of tRNAs on improperly translocated ribosomes. Back-translocation proceeds from a post-translocation (POST) complex to a pre-translocation (PRE) complex, thus giving elongation factor G a second chance to translocate the tRNAs correctly. Binds to ribosomes in a GTP-dependent manner. The sequence is that of Elongation factor 4 from Borreliella burgdorferi (strain ATCC 35210 / DSM 4680 / CIP 102532 / B31) (Borrelia burgdorferi).